Here is a 555-residue protein sequence, read N- to C-terminus: uncharacterized protein (555 aa).

Residues 1 to 28 (MRSGLFGVLRWTAVGLVATLVASLALTA) form the signal peptide. Cys29 is lipidated: N-palmitoyl cysteine. Cys29 carries S-diacylglycerol cysteine lipidation.

The protein to M.tuberculosis Rv2585c and M.bovis Mb2616c.

Its subcellular location is the cell membrane. This is an uncharacterized protein from Mycobacterium leprae (strain TN).